The following is a 228-amino-acid chain: Cytidylate kinase (228 aa).

Position 12–20 (12–20) interacts with ATP; sequence GPSGSGKGT.

Belongs to the cytidylate kinase family. Type 1 subfamily.

Its subcellular location is the cytoplasm. The catalysed reaction is CMP + ATP = CDP + ADP. It catalyses the reaction dCMP + ATP = dCDP + ADP. The chain is Cytidylate kinase from Pseudomonas putida (strain ATCC 47054 / DSM 6125 / CFBP 8728 / NCIMB 11950 / KT2440).